The sequence spans 724 residues: Phenylalanine ammonia-lyase (724 aa).

The Proton donor/acceptor role is filled by Tyr-99. Residues 204 to 206 (ASG) constitute a cross-link (5-imidazolinone (Ala-Gly)). Ser-205 is modified (2,3-didehydroalanine (Ser)). (E)-cinnamate contacts are provided by Asn-265, Gln-355, Arg-361, Asn-391, Lys-462, Glu-490, and Asn-493.

It belongs to the PAL/histidase family. Homotetramer. In terms of processing, contains an active site 4-methylidene-imidazol-5-one (MIO), which is formed autocatalytically by cyclization and dehydration of residues Ala-Ser-Gly.

The protein resides in the cytoplasm. It carries out the reaction L-phenylalanine = (E)-cinnamate + NH4(+). The protein operates within phenylpropanoid metabolism; trans-cinnamate biosynthesis; trans-cinnamate from L-phenylalanine: step 1/1. Catalyzes the non-oxidative deamination of L-phenylalanine to form trans-cinnamic acid and a free ammonium ion. Facilitates the commitment step in phenylpropanoid pathways that produce secondary metabolites such as lignins, coumarins and flavonoids. The protein is Phenylalanine ammonia-lyase of Flammulina velutipes (Agaricus velutipes).